The following is a 407-amino-acid chain: 4-hydroxy-3-methylbut-2-en-1-yl diphosphate synthase (flavodoxin) (407 aa).

The [4Fe-4S] cluster site is built by cysteine 296, cysteine 299, cysteine 342, and glutamate 349.

Belongs to the IspG family. Requires [4Fe-4S] cluster as cofactor.

The enzyme catalyses (2E)-4-hydroxy-3-methylbut-2-enyl diphosphate + oxidized [flavodoxin] + H2O + 2 H(+) = 2-C-methyl-D-erythritol 2,4-cyclic diphosphate + reduced [flavodoxin]. The protein operates within isoprenoid biosynthesis; isopentenyl diphosphate biosynthesis via DXP pathway; isopentenyl diphosphate from 1-deoxy-D-xylulose 5-phosphate: step 5/6. In terms of biological role, converts 2C-methyl-D-erythritol 2,4-cyclodiphosphate (ME-2,4cPP) into 1-hydroxy-2-methyl-2-(E)-butenyl 4-diphosphate. The polypeptide is 4-hydroxy-3-methylbut-2-en-1-yl diphosphate synthase (flavodoxin) (Methylococcus capsulatus (strain ATCC 33009 / NCIMB 11132 / Bath)).